The following is a 261-amino-acid chain: Kallikrein-1E2 (261 aa).

An N-terminal signal peptide occupies residues 1 to 17; sequence MWFLVLCLDLSLGETGA. The propeptide at 18-24 is activation peptide; sequence LPPIQSR. In terms of domain architecture, Peptidase S1 spans 25 to 258; the sequence is IIGGWECEKH…HLKWIKETIE (234 aa). Cystine bridges form between Cys-31/Cys-173, Cys-50/Cys-66, Cys-152/Cys-219, Cys-184/Cys-198, and Cys-209/Cys-234. The active-site Charge relay system is His-65. An N-linked (GlcNAc...) asparagine glycan is attached at Asn-79. Asp-120 serves as the catalytic Charge relay system. Catalysis depends on Ser-213, which acts as the Charge relay system.

Belongs to the peptidase S1 family. Kallikrein subfamily. In terms of tissue distribution, detected in prostate and semen.

Its subcellular location is the secreted. The catalysed reaction is Preferential cleavage of Arg-|-Xaa bonds in small molecule substrates. Highly selective action to release kallidin (lysyl-bradykinin) from kininogen involves hydrolysis of Met-|-Xaa or Leu-|-Xaa.. In terms of biological role, glandular kallikreins cleave Met-Lys and Arg-Ser bonds in kininogen to release Lys-bradykinin. This is Kallikrein-1E2 (KLK1E2) from Equus caballus (Horse).